A 435-amino-acid chain; its full sequence is CBL-interacting protein kinase 28 (435 aa).

A Protein kinase domain is found at 11 to 265; that stretch reads YVIGRQLGQG…ISRIKRSAWY (255 aa). Residues 17 to 25 and Lys40 each bind ATP; that span reads LGQGTFGKV. Asp133 acts as the Proton acceptor in catalysis. The activation loop stretch occupies residues 151–180; sequence DFGLSALAESRRQDGLLHTACGTPAYVAPE. Residues 283-329 form the NAF domain; that stretch reads CTSEAPFSGPTICISSERNQEPPNLHNLNAFDIISLSTGFDLSGLFG. The tract at residues 334 to 363 is PPI; the sequence is RRESLFTSRKPAAAVLVKLKELAKALNLKV.

The protein belongs to the protein kinase superfamily. CAMK Ser/Thr protein kinase family. SNF1 subfamily. It depends on Mn(2+) as a cofactor.

It carries out the reaction L-seryl-[protein] + ATP = O-phospho-L-seryl-[protein] + ADP + H(+). It catalyses the reaction L-threonyl-[protein] + ATP = O-phospho-L-threonyl-[protein] + ADP + H(+). CIPK serine-threonine protein kinases interact with CBL proteins. Binding of a CBL protein to the regulatory NAF domain of CIPK protein lead to the activation of the kinase in a calcium-dependent manner. The protein is CBL-interacting protein kinase 28 (CIPK28) of Oryza sativa subsp. japonica (Rice).